The following is a 227-amino-acid chain: 2,3-bisphosphoglycerate-dependent phosphoglycerate mutase (227 aa).

Substrate is bound by residues 7–14 (RHGQSEWN), 20–21 (TG), Arg-59, 86–89 (ERHY), Lys-97, 113–114 (RR), and 182–183 (GN). His-8 (tele-phosphohistidine intermediate) is an active-site residue. Residue Glu-86 is the Proton donor/acceptor of the active site.

It belongs to the phosphoglycerate mutase family. BPG-dependent PGAM subfamily. As to quaternary structure, homodimer.

It catalyses the reaction (2R)-2-phosphoglycerate = (2R)-3-phosphoglycerate. The protein operates within carbohydrate degradation; glycolysis; pyruvate from D-glyceraldehyde 3-phosphate: step 3/5. Its function is as follows. Catalyzes the interconversion of 2-phosphoglycerate and 3-phosphoglycerate. The polypeptide is 2,3-bisphosphoglycerate-dependent phosphoglycerate mutase (Neisseria meningitidis serogroup C (strain 053442)).